Here is a 425-residue protein sequence, read N- to C-terminus: Putative dipeptidase MGYG_00085 (425 aa).

A signal peptide spans Met-1 to Val-31. The Zn(2+) site is built by His-56, Asp-58, and Glu-168. Cys-107 and Cys-197 are disulfide-bonded. His-195 provides a ligand contact to substrate. The Zn(2+) site is built by His-239 and His-260. Residues Arg-271 and Asp-331 each coordinate substrate. A glycan (N-linked (GlcNAc...) asparagine) is linked at Asn-403.

It belongs to the metallo-dependent hydrolases superfamily. Peptidase M19 family. The cofactor is Zn(2+).

The enzyme catalyses an L-aminoacyl-L-amino acid + H2O = 2 an L-alpha-amino acid. Hydrolyzes a wide range of dipeptides. In Arthroderma gypseum (strain ATCC MYA-4604 / CBS 118893) (Microsporum gypseum), this protein is Putative dipeptidase MGYG_00085.